The following is a 245-amino-acid chain: 1-(5-phosphoribosyl)-5-[(5-phosphoribosylamino)methylideneamino] imidazole-4-carboxamide isomerase (245 aa).

D7 functions as the Proton acceptor in the catalytic mechanism. Catalysis depends on D129, which acts as the Proton donor.

It belongs to the HisA/HisF family.

It localises to the cytoplasm. The catalysed reaction is 1-(5-phospho-beta-D-ribosyl)-5-[(5-phospho-beta-D-ribosylamino)methylideneamino]imidazole-4-carboxamide = 5-[(5-phospho-1-deoxy-D-ribulos-1-ylimino)methylamino]-1-(5-phospho-beta-D-ribosyl)imidazole-4-carboxamide. Its pathway is amino-acid biosynthesis; L-histidine biosynthesis; L-histidine from 5-phospho-alpha-D-ribose 1-diphosphate: step 4/9. The sequence is that of 1-(5-phosphoribosyl)-5-[(5-phosphoribosylamino)methylideneamino] imidazole-4-carboxamide isomerase from Escherichia coli (strain SMS-3-5 / SECEC).